We begin with the raw amino-acid sequence, 716 residues long: Translation initiation factor IF-2 (716 aa).

Residues Tyr50–Lys136 form a disordered region. A compositionally biased stretch (polar residues) spans Pro62 to Asn84. Basic residues predominate over residues Lys101–Arg113. A compositionally biased stretch (low complexity) spans Asn114–Pro126. The region spanning Ile217–Lys386 is the tr-type G domain. Residues Gly226–Thr233 form a G1 region. Residue Gly226–Thr233 participates in GTP binding. The interval Gly251–His255 is G2. Positions Asp272–Gly275 are G3. Residues Asp272–His276 and Asn326–Asp329 each bind GTP. The interval Asn326 to Asp329 is G4. The interval Ser362–Leu364 is G5.

Belongs to the TRAFAC class translation factor GTPase superfamily. Classic translation factor GTPase family. IF-2 subfamily.

It localises to the cytoplasm. Its function is as follows. One of the essential components for the initiation of protein synthesis. Protects formylmethionyl-tRNA from spontaneous hydrolysis and promotes its binding to the 30S ribosomal subunits. Also involved in the hydrolysis of GTP during the formation of the 70S ribosomal complex. In Bacillus subtilis (strain 168), this protein is Translation initiation factor IF-2 (infB).